The chain runs to 176 residues: MTNIRKSHPLLKIINKSFVDLPAPSNISSWWNFGSLLGICLMLQIMTGLFLAMHYTADTTTAFNSVTHICRDVNYGWMLRYLHANGASMFFICLYLHVGRGLYYGSYLYKETWNVGVLLLFTVMATAFMGYVLPWGQMSFWGATVITNLLSAIPYIGTTLVEWIWGGFSVDKATLT.

Helical transmembrane passes span 33–53 (FGSL…FLAM), 77–98 (WMLR…YLHV), and 113–133 (WNVG…GYVL). Heme b contacts are provided by histidine 83 and histidine 97.

This sequence belongs to the cytochrome b family. The cytochrome bc1 complex contains 11 subunits: 3 respiratory subunits (MT-CYB, CYC1 and UQCRFS1), 2 core proteins (UQCRC1 and UQCRC2) and 6 low-molecular weight proteins (UQCRH/QCR6, UQCRB/QCR7, UQCRQ/QCR8, UQCR10/QCR9, UQCR11/QCR10 and a cleavage product of UQCRFS1). This cytochrome bc1 complex then forms a dimer. Heme b serves as cofactor.

The protein resides in the mitochondrion inner membrane. Functionally, component of the ubiquinol-cytochrome c reductase complex (complex III or cytochrome b-c1 complex) that is part of the mitochondrial respiratory chain. The b-c1 complex mediates electron transfer from ubiquinol to cytochrome c. Contributes to the generation of a proton gradient across the mitochondrial membrane that is then used for ATP synthesis. The protein is Cytochrome b (MT-CYB) of Idionycteris phyllotis (Allen's big-eared bat).